The chain runs to 436 residues: Histidinol dehydrogenase (436 aa).

Tyr-135, Gln-197, and Asn-220 together coordinate NAD(+). 3 residues coordinate substrate: Thr-243, Gln-265, and His-268. The Zn(2+) site is built by Gln-265 and His-268. Residues Glu-334 and His-335 each act as proton acceptor in the active site. Substrate contacts are provided by His-335, Asp-368, Glu-422, and His-427. Residue Asp-368 coordinates Zn(2+). His-427 contacts Zn(2+).

The protein belongs to the histidinol dehydrogenase family. Zn(2+) serves as cofactor.

The catalysed reaction is L-histidinol + 2 NAD(+) + H2O = L-histidine + 2 NADH + 3 H(+). Its pathway is amino-acid biosynthesis; L-histidine biosynthesis; L-histidine from 5-phospho-alpha-D-ribose 1-diphosphate: step 9/9. Catalyzes the sequential NAD-dependent oxidations of L-histidinol to L-histidinaldehyde and then to L-histidine. This is Histidinol dehydrogenase from Deinococcus radiodurans (strain ATCC 13939 / DSM 20539 / JCM 16871 / CCUG 27074 / LMG 4051 / NBRC 15346 / NCIMB 9279 / VKM B-1422 / R1).